The chain runs to 318 residues: Ribonuclease Z (318 aa).

Residues His-62, His-64, Asp-66, His-67, His-144, Asp-215, and His-273 each coordinate Zn(2+). The active-site Proton acceptor is Asp-66.

The protein belongs to the RNase Z family. As to quaternary structure, homodimer. Zn(2+) serves as cofactor.

It carries out the reaction Endonucleolytic cleavage of RNA, removing extra 3' nucleotides from tRNA precursor, generating 3' termini of tRNAs. A 3'-hydroxy group is left at the tRNA terminus and a 5'-phosphoryl group is left at the trailer molecule.. Its function is as follows. Zinc phosphodiesterase, which displays some tRNA 3'-processing endonuclease activity. Probably involved in tRNA maturation, by removing a 3'-trailer from precursor tRNA. This chain is Ribonuclease Z, found in Prochlorococcus marinus (strain MIT 9313).